The following is a 439-amino-acid chain: Serine/threonine-protein kinase 2 (439 aa).

The 353-residue stretch at Asn87 to Asn439 folds into the Protein kinase domain. Residues Ile93 to Val101 and Lys117 contribute to the ATP site. Catalysis depends on Asp307, which acts as the Proton acceptor.

Belongs to the protein kinase superfamily. Ser/Thr protein kinase family. In terms of processing, phosphorylated in vivo. Autophosphorylated in vitro.

It is found in the host endoplasmic reticulum. It localises to the host endoplasmic reticulum-Golgi intermediate compartment. It carries out the reaction L-seryl-[protein] + ATP = O-phospho-L-seryl-[protein] + ADP + H(+). It catalyses the reaction L-threonyl-[protein] + ATP = O-phospho-L-threonyl-[protein] + ADP + H(+). Its function is as follows. Essential serine-protein kinase involved in the early stage of virion morphogenesis. This chain is Serine/threonine-protein kinase 2 (OPG054), found in Bos taurus (Bovine).